The sequence spans 101 residues: NADH-quinone oxidoreductase subunit K (101 aa).

Helical transmembrane passes span 4–24 (LAHYLVLGAILFAMSIVGIFL), 29–49 (IIIILMAIELMLLAVNTNFVA), and 61–81 (IFVFFVLTVAAAEAAIGLAIL).

This sequence belongs to the complex I subunit 4L family. As to quaternary structure, NDH-1 is composed of 14 different subunits. Subunits NuoA, H, J, K, L, M, N constitute the membrane sector of the complex.

Its subcellular location is the cell inner membrane. The catalysed reaction is a quinone + NADH + 5 H(+)(in) = a quinol + NAD(+) + 4 H(+)(out). Its function is as follows. NDH-1 shuttles electrons from NADH, via FMN and iron-sulfur (Fe-S) centers, to quinones in the respiratory chain. The immediate electron acceptor for the enzyme in this species is believed to be ubiquinone. Couples the redox reaction to proton translocation (for every two electrons transferred, four hydrogen ions are translocated across the cytoplasmic membrane), and thus conserves the redox energy in a proton gradient. In Burkholderia vietnamiensis (strain G4 / LMG 22486) (Burkholderia cepacia (strain R1808)), this protein is NADH-quinone oxidoreductase subunit K.